Here is a 160-residue protein sequence, read N- to C-terminus: Calsequestrin-2 (160 aa).

This sequence belongs to the calsequestrin family. As to quaternary structure, monomer, homodimer and homooligomer. Mostly monomeric in the absence of calcium. Forms higher oligomers in a calcium-dependent manner. Dimers associate to form tetramers, that then form linear homomer chains. Interacts with ASPH and TRDN. In terms of processing, phosphorylation in the C-terminus, probably by CK2, moderately increases calcium buffering capacity. N-glycosylated.

The protein localises to the sarcoplasmic reticulum lumen. Functionally, calsequestrin is a high-capacity, moderate affinity, calcium-binding protein and thus acts as an internal calcium store in muscle. Calcium ions are bound by clusters of acidic residues at the protein surface, especially at the interface between subunits. Can bind around 60 Ca(2+) ions. Regulates the release of lumenal Ca(2+) via the calcium release channel RYR2; this plays an important role in triggering muscle contraction. Plays a role in excitation-contraction coupling in the heart and in regulating the rate of heart beats. This chain is Calsequestrin-2 (CASQ2), found in Sus scrofa (Pig).